The sequence spans 105 residues: Platelet factor 4 (105 aa).

The N-terminal stretch at 1-29 is a signal peptide; that stretch reads MSAAAVFRGLRPSPELLLLGLLLLPAVVA. T31 carries an O-linked (GalNAc...) threonine; partial glycan. Disulfide bonds link C44-C71 and C46-C87. Residue S61 is modified to Phosphoserine. 96-102 contributes to the heparin binding site; the sequence is KKIIKKL.

Belongs to the intercrine alpha (chemokine CxC) family. Homotetramer. Interacts with TNFAIP6 (via Link domain). Interacts with CCR1. Interacts with CXCR3. Interacts with THBD; this interaction enhances generation of activated protein C. In terms of processing, O-linked glycan consists of Gal-GalNAc disaccharide which is modified with sialic acid residues (microheterogeneity).

The protein resides in the secreted. Chemokine released during platelet aggregation that plays a role in different biological processes including hematopoiesis, cell proliferation, differentiation, and activation. Acts via different functional receptors including CCR1, CXCR3A or CXCR3B. Upon interaction with CXCR3A receptor, induces activated T-lymphocytes migration mediated via downstream Ras/extracellular signal-regulated kinase (ERK) signaling. Neutralizes the anticoagulant effect of heparin by binding more strongly to heparin than to the chondroitin-4-sulfate chains of the carrier molecule. Plays a role in the inhibition of hematopoiesis and in the maintenance of hematopoietic stem cell (HSC) quiescence. Chemotactic for neutrophils and monocytes via CCR1. Inhibits endothelial cell proliferation. In cooperation with toll-like receptor 8/TLR8, induces chromatin remodeling and activates inflammatory gene expression via the TBK1-IRF5 axis. In addition, induces myofibroblast differentiation and collagen synthesis in different precursor cells, including endothelial cells, by stimulating endothelial-to-mesenchymal transition. Interacts with thrombomodulin/THBD to enhance the activation of protein C and thus potentiates its anticoagulant activity. The protein is Platelet factor 4 (Pf4) of Rattus norvegicus (Rat).